We begin with the raw amino-acid sequence, 246 residues long: Eukaryotic translation initiation factor 6 (246 aa).

Residues Ser-174 and Ser-175 each carry the phosphoserine; by CK1 modification.

The protein belongs to the eIF-6 family. As to quaternary structure, monomer. Associates with the 60S ribosomal subunit. In terms of processing, phosphorylation at Ser-174 and Ser-175 promotes nuclear export.

The protein resides in the cytoplasm. It is found in the nucleus. The protein localises to the nucleolus. Its function is as follows. Binds to the 60S ribosomal subunit and prevents its association with the 40S ribosomal subunit to form the 80S initiation complex in the cytoplasm. Is also involved in ribosome biogenesis. Associates with pre-60S subunits in the nucleus and is involved in its nuclear export. This chain is Eukaryotic translation initiation factor 6, found in Sordaria macrospora (strain ATCC MYA-333 / DSM 997 / K(L3346) / K-hell).